A 104-amino-acid chain; its full sequence is Large ribosomal subunit protein uL24 (104 aa).

It belongs to the universal ribosomal protein uL24 family. In terms of assembly, part of the 50S ribosomal subunit.

Functionally, one of two assembly initiator proteins, it binds directly to the 5'-end of the 23S rRNA, where it nucleates assembly of the 50S subunit. In terms of biological role, one of the proteins that surrounds the polypeptide exit tunnel on the outside of the subunit. The chain is Large ribosomal subunit protein uL24 from Chromobacterium violaceum (strain ATCC 12472 / DSM 30191 / JCM 1249 / CCUG 213 / NBRC 12614 / NCIMB 9131 / NCTC 9757 / MK).